The primary structure comprises 465 residues: D-ornithine/D-lysine decarboxylase (465 aa).

Position 80 is an N6-(pyridoxal phosphate)lysine (lysine 80). Residues glycine 259 and glutamate 307–arginine 310 each bind pyridoxal 5'-phosphate. Cysteine 387 acts as the Proton donor in catalysis. Tyrosine 422 is a pyridoxal 5'-phosphate binding site.

This sequence belongs to the Orn/Lys/Arg decarboxylase class-II family. Homodimer. Pyridoxal 5'-phosphate is required as a cofactor.

It carries out the reaction D-ornithine + H(+) = putrescine + CO2. The enzyme catalyses D-lysine + H(+) = cadaverine + CO2. Catalyzes the decarboxylation of D-ornithine and D-lysine. Ornithine is likely the physiological substrate. Has no detectable diaminopimelate decarboxylase activity in vitro. This is D-ornithine/D-lysine decarboxylase from Salmonella typhimurium (strain LT2 / SGSC1412 / ATCC 700720).